A 208-amino-acid chain; its full sequence is N-(5'-phosphoribosyl)anthranilate isomerase (208 aa).

It belongs to the TrpF family.

The enzyme catalyses N-(5-phospho-beta-D-ribosyl)anthranilate = 1-(2-carboxyphenylamino)-1-deoxy-D-ribulose 5-phosphate. It functions in the pathway amino-acid biosynthesis; L-tryptophan biosynthesis; L-tryptophan from chorismate: step 3/5. The sequence is that of N-(5'-phosphoribosyl)anthranilate isomerase from Deinococcus radiodurans (strain ATCC 13939 / DSM 20539 / JCM 16871 / CCUG 27074 / LMG 4051 / NBRC 15346 / NCIMB 9279 / VKM B-1422 / R1).